A 100-amino-acid polypeptide reads, in one-letter code: Small ribosomal subunit protein uS14c (100 aa).

This sequence belongs to the universal ribosomal protein uS14 family. In terms of assembly, part of the 30S ribosomal subunit.

The protein resides in the plastid. The protein localises to the chloroplast. Binds 16S rRNA, required for the assembly of 30S particles. The polypeptide is Small ribosomal subunit protein uS14c (Gracilaria tenuistipitata var. liui (Red alga)).